A 181-amino-acid polypeptide reads, in one-letter code: Translation initiation factor IF-3 (181 aa).

It belongs to the IF-3 family. Monomer.

The protein resides in the cytoplasm. Functionally, IF-3 binds to the 30S ribosomal subunit and shifts the equilibrium between 70S ribosomes and their 50S and 30S subunits in favor of the free subunits, thus enhancing the availability of 30S subunits on which protein synthesis initiation begins. This chain is Translation initiation factor IF-3, found in Mycoplasma capricolum subsp. capricolum (strain California kid / ATCC 27343 / NCTC 10154).